The chain runs to 93 residues: Small ribosomal subunit protein uS19c (93 aa).

The protein belongs to the universal ribosomal protein uS19 family.

The protein resides in the plastid. It is found in the chloroplast. In terms of biological role, protein S19 forms a complex with S13 that binds strongly to the 16S ribosomal RNA. The sequence is that of Small ribosomal subunit protein uS19c (rps19-A) from Zea mays (Maize).